The following is a 254-amino-acid chain: MGSRLSPEANAEVPREALSFHGDATGAQVHLDDQRSTARRRSTFHDGIVFSQRPVWPGERVALRVLRHEDGWCGGLRVGFTRLDPAQVAASCLPPFVCPDLEEQSPTWAALLPEGFVRAGNVVCFWVNRRGWLFAKVNAGRPLLLRKDVLVQGAPLWAVMDVYGTTKAIELLDPKANAWITSGEPMPESEVTSGEECVICFHNTANTRLMPCGHSQFCGSCAWHIFKDTARCPMCRWQIEEVAVEPSVKSGEGS.

The NHR domain occupies 17–174 (ALSFHGDATG…TTKAIELLDP (158 aa)). Residues 197–236 (CVICFHNTANTRLMPCGHSQFCGSCAWHIFKDTARCPMCR) form an RING-type zinc finger.

It is found in the cytoplasm. It catalyses the reaction S-ubiquitinyl-[E2 ubiquitin-conjugating enzyme]-L-cysteine + [acceptor protein]-L-lysine = [E2 ubiquitin-conjugating enzyme]-L-cysteine + N(6)-ubiquitinyl-[acceptor protein]-L-lysine.. It functions in the pathway protein modification; protein ubiquitination. Functionally, E3 ubiquitin-protein ligase that plays a role in various biological processes such as lung development or innate immunity. Seems to utilize UBE2E1. Promotes innate antiviral response by catalyzing 'Lys-63'-linked ubiquitination of IRF7. Also inhibits hepatitis C virus assembly by directly binding to viral E1 envelope glycoprotein to disrupt its interaction with E2. Plays an essential role in TLR4-mediated activation of MAPK pathways by promoting 'Lys-48'-linked polyubiquitination of the phosphatase DUSP1/MKP1. The sequence is that of E3 ubiquitin-protein ligase NEURL3 (Neurl3) from Rattus norvegicus (Rat).